We begin with the raw amino-acid sequence, 159 residues long: 2-C-methyl-D-erythritol 2,4-cyclodiphosphate synthase (159 aa).

Positions 8 and 10 each coordinate a divalent metal cation. Residues 8-10 (DVH) and 34-35 (HS) contribute to the 4-CDP-2-C-methyl-D-erythritol 2-phosphate site. Histidine 42 provides a ligand contact to a divalent metal cation. 4-CDP-2-C-methyl-D-erythritol 2-phosphate is bound by residues 56–58 (DIG), 61–65 (FPDTD), 100–106 (AQAPKML), 132–135 (TTTE), phenylalanine 139, and arginine 142.

It belongs to the IspF family. In terms of assembly, homotrimer. Requires a divalent metal cation as cofactor.

It catalyses the reaction 4-CDP-2-C-methyl-D-erythritol 2-phosphate = 2-C-methyl-D-erythritol 2,4-cyclic diphosphate + CMP. The protein operates within isoprenoid biosynthesis; isopentenyl diphosphate biosynthesis via DXP pathway; isopentenyl diphosphate from 1-deoxy-D-xylulose 5-phosphate: step 4/6. In terms of biological role, involved in the biosynthesis of isopentenyl diphosphate (IPP) and dimethylallyl diphosphate (DMAPP), two major building blocks of isoprenoid compounds. Catalyzes the conversion of 4-diphosphocytidyl-2-C-methyl-D-erythritol 2-phosphate (CDP-ME2P) to 2-C-methyl-D-erythritol 2,4-cyclodiphosphate (ME-CPP) with a corresponding release of cytidine 5-monophosphate (CMP). The polypeptide is 2-C-methyl-D-erythritol 2,4-cyclodiphosphate synthase (Escherichia coli O127:H6 (strain E2348/69 / EPEC)).